We begin with the raw amino-acid sequence, 575 residues long: RecBCD enzyme subunit RecD (575 aa).

170 to 177 lines the ATP pocket; the sequence is GGPGTGKT.

It belongs to the RecD family. Heterotrimer of RecB, RecC and RecD. All subunits contribute to DNA-binding.

It catalyses the reaction Couples ATP hydrolysis with the unwinding of duplex DNA at the replication fork by translocating in the 5'-3' direction. This creates two antiparallel DNA single strands (ssDNA). The leading ssDNA polymer is the template for DNA polymerase III holoenzyme which synthesizes a continuous strand.. The enzyme catalyses ATP + H2O = ADP + phosphate + H(+). A helicase/nuclease that prepares dsDNA breaks (DSB) for recombinational DNA repair. Binds to DSBs and unwinds DNA via a highly rapid and processive ATP-dependent bidirectional helicase activity. Holoenzyme degrades any linearized DNA that is unable to undergo homologous recombination. In the holoenzyme this subunit has ssDNA-dependent ATPase and 5'-3' helicase activity. When added to pre-assembled RecBC greatly stimulates nuclease activity and augments holoenzyme processivity. Unlike the case in E.coli, suppresses RecA-dependent homologous recombination, is instead required for single-strand annealing pathway repair of DSB. Its function is as follows. A helicase/nuclease that prepares dsDNA breaks (DSB) for recombinational DNA repair. Binds to DSBs and unwinds DNA via a highly rapid and processive ATP-dependent bidirectional helicase activity. Unwinds dsDNA until it encounters a Chi (crossover hotspot instigator) sequence from the 3' direction. Cuts ssDNA a few nucleotides 3' to the Chi site. The properties and activities of the enzyme are changed at Chi. The Chi-altered holoenzyme produces a long 3'-ssDNA overhang and facilitates RecA-binding to the ssDNA for homologous DNA recombination and repair. Holoenzyme degrades any linearized DNA that is unable to undergo homologous recombination. In the holoenzyme this subunit has ssDNA-dependent ATPase and 5'-3' helicase activity. When added to pre-assembled RecBC greatly stimulates nuclease activity and augments holoenzyme processivity. Negatively regulates the RecA-loading ability of RecBCD. The sequence is that of RecBCD enzyme subunit RecD from Mycobacterium tuberculosis (strain CDC 1551 / Oshkosh).